An 89-amino-acid polypeptide reads, in one-letter code: Phosphoribulokinase, chloroplastic (89 aa).

A disordered region spans residues 1-22; it reads LTSVFGGAAEPPRGGNPDSNTL.

It belongs to the phosphoribulokinase family.

It is found in the plastid. The protein resides in the chloroplast. It carries out the reaction D-ribulose 5-phosphate + ATP = D-ribulose 1,5-bisphosphate + ADP + H(+). Its pathway is carbohydrate biosynthesis; Calvin cycle. Its activity is regulated as follows. Light regulated via thioredoxin by reversible oxidation/reduction of sulfhydryl/disulfide groups. The sequence is that of Phosphoribulokinase, chloroplastic from Vitis sp. (Grape).